We begin with the raw amino-acid sequence, 290 residues long: Phosphoribulokinase (290 aa).

12–20 (GSSGAGTTS) contributes to the ATP binding site.

This sequence belongs to the phosphoribulokinase family.

The enzyme catalyses D-ribulose 5-phosphate + ATP = D-ribulose 1,5-bisphosphate + ADP + H(+). It functions in the pathway carbohydrate biosynthesis; Calvin cycle. The sequence is that of Phosphoribulokinase (cbbP) from Nitrobacter vulgaris.